Consider the following 1166-residue polypeptide: MINRDNKKAITKKGMISNRLNKFSIRKYTVGTASILVGTTLIFGLGNQEAKAAENTSTENAKQDDATTSDNKEVVSETENNSTTENNSTNPIKKETNTDSQPEAKKESTSSSTQKQQNNVTATTETKPQNIEKENVKPSTDKTATEDTSVILEEKKAPNNTNNDVTTKPSTSEPSTSEIQTKPTTPQESTNIENSQPQPTPSKVDNQVTDATNPKEPVNVSKEELKNNPEKLKELVRNDSNTDHSTKPVATAPTSVAPKRVNAKMRFAVAQPAAVASNNVNDLIKVTKQTIKVGDGKDNVAAAHDGKDIEYDTEFTIDNKVKKGDTMTINYDKNVIPSDLTDKNDPIDITDPSGEVIAKGTFDKATKQITYTFTDYVDKYEDIKSRLTLYSYIDKKTVPNETSLNLTFATAGKETSQNVTVDYQDPMVHGDSNIQSIFTKLDEDKQTIEQQIYVNPLKKSATNTKVDIAGSQVDDYGNIKLGNGSTIIDQNTEIKVYKVNSDQQLPQSNRIYDFSQYEDVTSQFDNKKSFSNNVATLDFGDINSAYIIKVVSKYTPTSDGELDIAQGTSMRTTDKYGYYNYAGYSNFIVTSNDTGGGDGTVKPEEKLYKIGDYVWEDVDKDGVQGTDSKEKPMANVLVTLTYPDGTTKSVRTDANGHYEFGGLKDGETYTVKFETPTGYLPTKVNGTTDGEKDSNGSSVTVKINGKDDMSLDTGFYKEPKYNLGDYVWEDTNKDGIQDANEPGIKDVKVTLKDSTGKVIGTTTTDASGKYKFTDLDNGNYTVEFETPAGYTPTVKNTTADDKDSNGLTTTGVIKDADNMTLDRGFYKTPKYSLGDYVWYDSNKDGKQDSTEKGIKDVTVTLQNEKGEVIGTTKTDENGKYRFDNLDSGKYKVIFEKPAGLTQTVTNTTEDDKDADGGEVDVTITDHDDFTLDNGYFEEDTSDSDSDSDSDSDSDSDSDSDSDSDSDSDSDSDSDSDSDSDSDSDSDSDSDSDSDSDSDSDSDSDSDSDSDSDSDSDSDSDSDSDSDSDSDSDSDSDSDSDSDSDSDSDSDSDSDSDSDSDSDSDSDSDSDSDSDSDSDSDSDSDSDSDSDSDSDSDSDSDSDSDSDAGKHTPVKPMSTTKDHHNKAKALPETGSENNGSNNATLFGGLFAALGSLLLFGRRKKQNK.

A signal peptide spans 1 to 52; it reads MINRDNKKAITKKGMISNRLNKFSIRKYTVGTASILVGTTLIFGLGNQEAKA. Residues 23–34 carry the YSIRK-G/S signaling motif motif; sequence FSIRKYTVGTAS. A ligand binding A region region spans residues 53-606; it reads AENTSTENAK…GDGTVKPEEK (554 aa). The tract at residues 54–230 is disordered; sequence ENTSTENAKQ…SKEELKNNPE (177 aa). Residues 61 to 75 are compositionally biased toward basic and acidic residues; it reads AKQDDATTSDNKEVV. Low complexity predominate over residues 77 to 90; sequence ETENNSTTENNSTN. Residues 92–108 show a composition bias toward basic and acidic residues; that stretch reads IKKETNTDSQPEAKKES. The segment covering 118–129 has biased composition (polar residues); the sequence is NNVTATTETKPQ. The span at 130-145 shows a compositional bias: basic and acidic residues; that stretch reads NIEKENVKPSTDKTAT. A compositionally biased stretch (low complexity) spans 166–178; it reads TTKPSTSEPSTSE. Positions 179-212 are enriched in polar residues; sequence IQTKPTTPQESTNIENSQPQPTPSKVDNQVTDAT. Residues 221–230 show a composition bias toward basic and acidic residues; that stretch reads SKEELKNNPE. CNA-B domains lie at 607 to 719, 720 to 829, and 830 to 940; these read LYKI…YKEP, KYNL…YKTP, and KYSL…EEDT. The interval 904–1141 is disordered; that stretch reads VTNTTEDDKD…TGSENNGSNN (238 aa). Composition is skewed to acidic residues over residues 908 to 918 and 935 to 1105; these read TEDDKDADGGE and YFEE…DSDS. The short motif at 1129 to 1133 is the LPXTG sorting signal element; it reads LPETG. Residue T1132 is modified to Pentaglycyl murein peptidoglycan amidated threonine. The propeptide at 1133-1166 is removed by sortase; that stretch reads GSENNGSNNATLFGGLFAALGSLLLFGRRKKQNK.

This sequence belongs to the serine-aspartate repeat-containing protein (SDr) family. In terms of assembly, interacts with host complement factor H/CFAH (via C-terminus). Interacts with host complement regulator C4BPA.

It localises to the secreted. Its subcellular location is the cell wall. Its function is as follows. Cell surface-associated calcium-binding protein which plays an important role in adhesion and pathogenesis. Contributes to the resistance to killing by innate immune components in blood and thus attenuates bacterial clearance by interacting with host complement factor H/CFAH and modulating its activity. Inhibits also bacterial opsonization and killing by interacting with host complement regulator C4BPA and thus inhibiting classical complement pathway activation. The sequence is that of Serine-aspartate repeat-containing protein E (sdrE) from Staphylococcus aureus (strain Newman).